The chain runs to 255 residues: Ciliogenesis and planar polarity effector 2 (255 aa).

The tract at residues 52 to 255 (PADIASYKLF…VIAGLVGGAD (204 aa)) is small GTPase-like. GTP-binding positions include 64–71 (GRSGAGKT) and 177–180 (TKLD).

It belongs to the small GTPase superfamily. Rab family.

The protein localises to the cytoplasm. It localises to the cytoskeleton. The protein resides in the cilium basal body. Potential effector of the planar cell polarity signaling pathway. Plays a role in targeted membrane trafficking most probably at the level of vesicle fusion with membranes. Involved in cilium biogenesis by regulating the transport of cargo proteins to the basal body and to the apical tips of cilia. More generally involved in exocytosis in secretory cells. This chain is Ciliogenesis and planar polarity effector 2 (cplane2), found in Xenopus tropicalis (Western clawed frog).